The chain runs to 265 residues: Tryptophan synthase alpha chain (265 aa).

Catalysis depends on proton acceptor residues glutamate 41 and aspartate 52.

This sequence belongs to the TrpA family. Tetramer of two alpha and two beta chains.

The catalysed reaction is (1S,2R)-1-C-(indol-3-yl)glycerol 3-phosphate + L-serine = D-glyceraldehyde 3-phosphate + L-tryptophan + H2O. The protein operates within amino-acid biosynthesis; L-tryptophan biosynthesis; L-tryptophan from chorismate: step 5/5. In terms of biological role, the alpha subunit is responsible for the aldol cleavage of indoleglycerol phosphate to indole and glyceraldehyde 3-phosphate. The sequence is that of Tryptophan synthase alpha chain from Bacillus velezensis (strain DSM 23117 / BGSC 10A6 / LMG 26770 / FZB42) (Bacillus amyloliquefaciens subsp. plantarum).